The sequence spans 300 residues: Mitochondrial GTP/GDP carrier protein 1 (300 aa).

Solcar repeat units lie at residues Q8–F108, G117–Y198, and A208–R293. Helical transmembrane passes span L14 to I34, Q85 to N101, S122 to L142, G173 to F189, F214 to I234, and G268 to A285.

Belongs to the mitochondrial carrier (TC 2.A.29) family.

The protein resides in the mitochondrion inner membrane. Mitochondrial GTP/GDP transporter required for GTP uptake and GDP exit from mitochondria. Involved in mitochondrial iron transport and essential for mitochondrial genome maintenance. The chain is Mitochondrial GTP/GDP carrier protein 1 (GGC1) from Saccharomyces cerevisiae (strain ATCC 204508 / S288c) (Baker's yeast).